The following is a 1299-amino-acid chain: DExH-box ATP-dependent RNA helicase DExH6 (1299 aa).

The region spanning 15 to 82 is the R3H domain; sequence PTSVEATRIW…QRRLSIFKSR (68 aa). The Helicase ATP-binding domain occupies 197–366; the sequence is TSAVESNQVI…FGGCPVVRVP (170 aa). 210–217 contacts ATP; that stretch reads GETGCGKT. The short motif at 313 to 316 is the DEIH box element; it reads DEIH. The Helicase C-terminal domain maps to 537–711; the sequence is LIQQLMRKIC…ELCLQVKILD (175 aa). Disordered stretches follow at residues 987 to 1039 and 1175 to 1299; these read PTGS…MMSS and IPRQ…AEQK. The span at 992–1006 shows a compositional bias: acidic residues; that stretch reads DSDDSNEEEEDDEEV. Over residues 1007–1020 the composition is skewed to low complexity; that stretch reads AANTNEEVAANTNE. Basic and acidic residues predominate over residues 1023 to 1032; the sequence is MDIHKEESRR. 3 stretches are compositionally biased toward polar residues: residues 1176-1193, 1204-1214, and 1239-1251; these read PRQQNYKQRNPKATNNTD, NPTNRINQPEA, and PSDQAYGNKQHNT. The Bipartite nuclear localization signal motif lies at 1182-1200; it reads KQRNPKATNNTDSGKKKEK. The Bipartite nuclear localization signal signature appears at 1267 to 1283; it reads KKTKTRSGNNSDSGKKK. Basic and acidic residues predominate over residues 1279–1299; it reads SGKKKEQYIPKRQREDKAEQK.

The protein belongs to the DExH box helicase family. In terms of tissue distribution, specifically expressed in the tapetum and vascular tissues.

It is found in the nucleus. The enzyme catalyses ATP + H2O = ADP + phosphate + H(+). Its function is as follows. May function as an ATP-dependent RNA/DNA helicase. The sequence is that of DExH-box ATP-dependent RNA helicase DExH6 from Arabidopsis thaliana (Mouse-ear cress).